A 659-amino-acid chain; its full sequence is Exoribonuclease 2 (659 aa).

Positions 189–531 (RENLTALHFV…NHRLIKAVLA (343 aa)) constitute an RNB domain. Residues 576-658 (NAEFEAEVQD…ATRSIVGEIL (83 aa)) enclose the S1 motif domain.

The protein belongs to the RNR ribonuclease family. RNase II subfamily.

It localises to the cytoplasm. The catalysed reaction is Exonucleolytic cleavage in the 3'- to 5'-direction to yield nucleoside 5'-phosphates.. Its function is as follows. Involved in mRNA degradation. Hydrolyzes single-stranded polyribonucleotides processively in the 3' to 5' direction. This chain is Exoribonuclease 2, found in Haemophilus influenzae (strain PittGG).